The primary structure comprises 616 residues: Proline--tRNA ligase (616 aa).

The protein belongs to the class-II aminoacyl-tRNA synthetase family. ProS type 1 subfamily. As to quaternary structure, homodimer.

Its subcellular location is the cytoplasm. The enzyme catalyses tRNA(Pro) + L-proline + ATP = L-prolyl-tRNA(Pro) + AMP + diphosphate. In terms of biological role, catalyzes the attachment of proline to tRNA(Pro) in a two-step reaction: proline is first activated by ATP to form Pro-AMP and then transferred to the acceptor end of tRNA(Pro). As ProRS can inadvertently accommodate and process non-cognate amino acids such as alanine and cysteine, to avoid such errors it has two additional distinct editing activities against alanine. One activity is designated as 'pretransfer' editing and involves the tRNA(Pro)-independent hydrolysis of activated Ala-AMP. The other activity is designated 'posttransfer' editing and involves deacylation of mischarged Ala-tRNA(Pro). The misacylated Cys-tRNA(Pro) is not edited by ProRS. The polypeptide is Proline--tRNA ligase (Streptococcus gordonii (strain Challis / ATCC 35105 / BCRC 15272 / CH1 / DL1 / V288)).